The chain runs to 461 residues: Peptidyl-prolyl cis-trans isomerase-like 4 (461 aa).

Positions 1 to 171 constitute a PPIase cyclophilin-type domain; that stretch reads MSVLLETSLG…KDIRIRHTVI (171 aa). Positions 248–326 constitute an RRM domain; that stretch reads NVLFVCKLNP…HRIHVDFSQS (79 aa). The interval 372–461 is disordered; that stretch reads NYNMVFDKND…DDRYRDRRRR (90 aa). Basic and acidic residues-rich tracts occupy residues 378-392 and 400-461; these read DKND…ERSY and NYRD…RRRR.

Belongs to the cyclophilin-type PPIase family. PPIL4 subfamily.

It is found in the nucleus. It catalyses the reaction [protein]-peptidylproline (omega=180) = [protein]-peptidylproline (omega=0). Its function is as follows. PPIases accelerate the folding of proteins. It catalyzes the cis-trans isomerization of proline imidic peptide bonds in oligopeptides. The polypeptide is Peptidyl-prolyl cis-trans isomerase-like 4 (cyp6) (Emericella nidulans (strain FGSC A4 / ATCC 38163 / CBS 112.46 / NRRL 194 / M139) (Aspergillus nidulans)).